The sequence spans 81 residues: MSHAVKIYDTCIGCTQCVRACPLDVLEMVPWDGCKAAQIASSPRTEDCVGCKRCETACPTDFLSIRVYLGDETSRSMGLAY.

4Fe-4S ferredoxin-type domains follow at residues 2 to 31 (SHAV…MVPW) and 39 to 68 (IASS…IRVY). Cys-11, Cys-14, Cys-17, Cys-21, Cys-48, Cys-51, Cys-54, and Cys-58 together coordinate [4Fe-4S] cluster.

As to quaternary structure, the cyanobacterial PSI reaction center is composed of one copy each of PsaA,B,C,D,E,F,I,J,K,L,M and X, and forms trimeric complexes. Requires [4Fe-4S] cluster as cofactor.

The protein resides in the cellular thylakoid membrane. It carries out the reaction reduced [plastocyanin] + hnu + oxidized [2Fe-2S]-[ferredoxin] = oxidized [plastocyanin] + reduced [2Fe-2S]-[ferredoxin]. Functionally, apoprotein for the two 4Fe-4S centers FA and FB of photosystem I (PSI); essential for photochemical activity. FB is the terminal electron acceptor of PSI, donating electrons to ferredoxin. The C-terminus interacts with PsaA/B/D and helps assemble the protein into the PSI complex. Required for binding of PsaD and PsaE to PSI. PSI is a plastocyanin/cytochrome c6-ferredoxin oxidoreductase, converting photonic excitation into a charge separation, which transfers an electron from the donor P700 chlorophyll pair to the spectroscopically characterized acceptors A0, A1, FX, FA and FB in turn. This is Photosystem I iron-sulfur center from Prochlorococcus marinus (strain MIT 9312).